The primary structure comprises 305 residues: Transmembrane protein 74 (305 aa).

Disordered stretches follow at residues Ala52–Ser88 and Arg123–Asn143. Positions Ser58–Pro78 are enriched in low complexity. 2 helical membrane-spanning segments follow: residues Phe178 to Val198 and Val232 to Met252.

The protein belongs to the TMEM74 family. As to expression, expressed in heart, lung, and placenta.

It is found in the lysosome membrane. Its subcellular location is the cytoplasmic vesicle. The protein resides in the autophagosome membrane. Functionally, plays an essential role in autophagy. TMEM74-induced autophagy may involve PI3K signal transduction. The chain is Transmembrane protein 74 (TMEM74) from Homo sapiens (Human).